The sequence spans 485 residues: NGFI-A-binding protein 1 (485 aa).

Positions alanine 4–phenylalanine 82 are NCD1. Glycyl lysine isopeptide (Lys-Gly) (interchain with G-Cter in SUMO2) cross-links involve residues lysine 126, lysine 129, and lysine 143. The disordered stretch occupies residues tryptophan 160 to serine 187. A phosphoserine mark is found at serine 171 and serine 182. Residue lysine 211 forms a Glycyl lysine isopeptide (Lys-Gly) (interchain with G-Cter in SUMO2) linkage. The segment at leucine 220 to tyrosine 309 is NCD2. The segment at glutamate 306–phenylalanine 337 is necessary for nuclear localization. Serine 327 is modified (phosphoserine). Lysine 332 is covalently cross-linked (Glycyl lysine isopeptide (Lys-Gly) (interchain with G-Cter in SUMO1); alternate). A Glycyl lysine isopeptide (Lys-Gly) (interchain with G-Cter in SUMO2); alternate cross-link involves residue lysine 332. Glycyl lysine isopeptide (Lys-Gly) (interchain with G-Cter in SUMO2) cross-links involve residues lysine 354, lysine 368, and lysine 372. Residues arginine 398–arginine 432 are disordered. At serine 405 the chain carries Phosphoserine. Glycyl lysine isopeptide (Lys-Gly) (interchain with G-Cter in SUMO2) cross-links involve residues lysine 452, lysine 463, and lysine 475. Residue lysine 478 forms a Glycyl lysine isopeptide (Lys-Gly) (interchain with G-Cter in SUMO1); alternate linkage. Lysine 478 is covalently cross-linked (Glycyl lysine isopeptide (Lys-Gly) (interchain with G-Cter in SUMO2); alternate).

It belongs to the NAB family. Homomultimers may associate with EGR1 bound to DNA.

It localises to the nucleus. In terms of biological role, acts as a transcriptional repressor for zinc finger transcription factors EGR1 and EGR2. This chain is NGFI-A-binding protein 1 (NAB1), found in Mesocricetus auratus (Golden hamster).